The following is a 202-amino-acid chain: FMN-dependent NADH:quinone oxidoreductase (202 aa).

Residues Ser9, 15-17 (SAS), and 94-97 (MYNL) each bind FMN.

This sequence belongs to the azoreductase type 1 family. Homodimer. It depends on FMN as a cofactor.

It catalyses the reaction 2 a quinone + NADH + H(+) = 2 a 1,4-benzosemiquinone + NAD(+). It carries out the reaction N,N-dimethyl-1,4-phenylenediamine + anthranilate + 2 NAD(+) = 2-(4-dimethylaminophenyl)diazenylbenzoate + 2 NADH + 2 H(+). In terms of biological role, quinone reductase that provides resistance to thiol-specific stress caused by electrophilic quinones. Functionally, also exhibits azoreductase activity. Catalyzes the reductive cleavage of the azo bond in aromatic azo compounds to the corresponding amines. This is FMN-dependent NADH:quinone oxidoreductase from Gluconobacter oxydans (strain 621H) (Gluconobacter suboxydans).